The sequence spans 335 residues: NAC domain-containing protein 40 (335 aa).

Residues 14–156 (LFPGFRFSPT…ALVVCRLRKN (143 aa)) enclose the NAC domain. Residues 112 to 162 (VGTKRTLVFHIGRAPRGERTEWIMHEYCIHGAPQDALVVCRLRKNADFRAS) mediate DNA binding. Positions 245–254 (PTNPTHQETI) are enriched in polar residues. The segment at 245–267 (PTNPTHQETISSESSSKRSKCGI) is disordered. A helical transmembrane segment spans residues 313 to 333 (VLATTVFLAILFSFFWTVLIA).

Post-translationally, proteolytically cleaved, probably by metalloprotease activity. This cleavage mediates a translocation from the plasma membrane to the nucleus. In terms of tissue distribution, expressed in seeds, leaves, roots and inflorescence. Expressed in roots, rosette leaves, cauline leaves, shoot apex, stems and flowers.

It is found in the cell membrane. It localises to the nucleus. Functionally, transcriptional activator activated by proteolytic cleavage through regulated intramembrane proteolysis (RIP), probably via metalloprotease activity. Regulates gibberellic acid-mediated salt-responsive repression of seed germination and flowering via FT, thus delaying seed germination under high salinity conditions. This is NAC domain-containing protein 40 from Arabidopsis thaliana (Mouse-ear cress).